The chain runs to 498 residues: Type II secretion system protein E (498 aa).

Residue Gly-261–Ser-268 coordinates ATP. Residues Cys-394, Cys-397, Cys-425, and Cys-428 each coordinate Zn(2+).

This sequence belongs to the GSP E family. As to quaternary structure, forms homooligomers; most probably hexamers. Interacts with OutL/GspL. It depends on Zn(2+) as a cofactor.

It is found in the cell inner membrane. The catalysed reaction is ATP + H2O + cellular proteinSide 1 = ADP + phosphate + cellular proteinSide 2.. In terms of biological role, ATPase component of the type II secretion system required for the energy-dependent secretion of extracellular factors such as proteases and toxins from the periplasm. Acts as a molecular motor to provide the energy that is required for assembly of the pseudopilus and the extrusion of substrates generated in the cytoplasm. This is Type II secretion system protein E (outE) from Pectobacterium carotovorum subsp. carotovorum (Erwinia carotovora subsp. carotovora).